The following is a 663-amino-acid chain: Translation factor GUF1, mitochondrial (663 aa).

The transit peptide at 1-44 (MRGCLQSVRWLTTALRRPAPQLSCLPFQPFASTSRLFSSCASRA) directs the protein to the mitochondrion. One can recognise a tr-type G domain in the interval 65 to 245 (ERFRNFCIVA…TIVEQIPAPV (181 aa)). GTP is bound by residues 74-81 (AHVDHGKS), 138-142 (DTPGH), and 192-195 (NKVD).

Belongs to the TRAFAC class translation factor GTPase superfamily. Classic translation factor GTPase family. LepA subfamily.

Its subcellular location is the mitochondrion inner membrane. It catalyses the reaction GTP + H2O = GDP + phosphate + H(+). Promotes mitochondrial protein synthesis. May act as a fidelity factor of the translation reaction, by catalyzing a one-codon backward translocation of tRNAs on improperly translocated ribosomes. Binds to mitochondrial ribosomes in a GTP-dependent manner. This is Translation factor GUF1, mitochondrial from Coccidioides posadasii (strain C735) (Valley fever fungus).